Here is a 407-residue protein sequence, read N- to C-terminus: Betaine--homocysteine S-methyltransferase 1 (407 aa).

One can recognise a Hcy-binding domain in the interval 11–314 (KGILERLNSG…YHIRAIAEEL (304 aa)). Residues lysine 40, lysine 93, and lysine 98 each carry the N6-succinyllysine modification. Zn(2+) is bound at residue cysteine 217. N6-succinyllysine is present on residues lysine 232 and lysine 241. Cysteine 299 and cysteine 300 together coordinate Zn(2+). At serine 330 the chain carries Phosphoserine. 2 positions are modified to N6-succinyllysine: lysine 340 and lysine 377.

In terms of assembly, homotetramer. Zn(2+) serves as cofactor.

It is found in the cytoplasm. The protein resides in the cytosol. Its subcellular location is the nucleus. The enzyme catalyses L-homocysteine + glycine betaine = N,N-dimethylglycine + L-methionine. It participates in amine and polyamine degradation; betaine degradation; sarcosine from betaine: step 1/2. It functions in the pathway amino-acid biosynthesis; L-methionine biosynthesis via de novo pathway; L-methionine from L-homocysteine (BhmT route): step 1/1. Functionally, involved in the regulation of homocysteine metabolism. Converts betaine and homocysteine to dimethylglycine and methionine, respectively. This reaction is also required for the irreversible oxidation of choline. This is Betaine--homocysteine S-methyltransferase 1 (BHMT) from Bos taurus (Bovine).